Here is a 198-residue protein sequence, read N- to C-terminus: Recombination protein RecR (198 aa).

The C4-type zinc-finger motif lies at 57 to 72 (CSVCGHITENDPCYIC). The region spanning 80–175 (SVICVVEDDK…KVTRLAQGLS (96 aa)) is the Toprim domain.

This sequence belongs to the RecR family.

May play a role in DNA repair. It seems to be involved in an RecBC-independent recombinational process of DNA repair. It may act with RecF and RecO. The chain is Recombination protein RecR from Staphylococcus epidermidis (strain ATCC 35984 / DSM 28319 / BCRC 17069 / CCUG 31568 / BM 3577 / RP62A).